The sequence spans 281 residues: Bifunctional protein FolD (281 aa).

163–165 (GRS) lines the NADP(+) pocket.

Belongs to the tetrahydrofolate dehydrogenase/cyclohydrolase family. Homodimer.

It catalyses the reaction (6R)-5,10-methylene-5,6,7,8-tetrahydrofolate + NADP(+) = (6R)-5,10-methenyltetrahydrofolate + NADPH. The enzyme catalyses (6R)-5,10-methenyltetrahydrofolate + H2O = (6R)-10-formyltetrahydrofolate + H(+). It functions in the pathway one-carbon metabolism; tetrahydrofolate interconversion. Functionally, catalyzes the oxidation of 5,10-methylenetetrahydrofolate to 5,10-methenyltetrahydrofolate and then the hydrolysis of 5,10-methenyltetrahydrofolate to 10-formyltetrahydrofolate. This chain is Bifunctional protein FolD, found in Leuconostoc mesenteroides subsp. mesenteroides (strain ATCC 8293 / DSM 20343 / BCRC 11652 / CCM 1803 / JCM 6124 / NCDO 523 / NBRC 100496 / NCIMB 8023 / NCTC 12954 / NRRL B-1118 / 37Y).